A 484-amino-acid chain; its full sequence is Mitogen-activated protein kinase SLT2/MPK1 (484 aa).

A Protein kinase domain is found at 23 to 318; the sequence is FQLIKEIGHG…VDEALEHPYL (296 aa). ATP-binding positions include 29-37 and Lys-54; that span reads IGHGAYGIV. The active-site Proton acceptor is Asp-153. Residue Thr-190 is modified to Phosphothreonine. Positions 190 to 192 match the TXY motif; sequence TEY. Tyr-192 bears the Phosphotyrosine mark. The span at 383–392 shows a compositional bias: low complexity; the sequence is QQQQQQQQQP. Disordered stretches follow at residues 383–403 and 426–464; these read QQQQ…AAAS and IHSQ…PQND.

The protein belongs to the protein kinase superfamily. CMGC Ser/Thr protein kinase family. MAP kinase subfamily. In terms of assembly, interacts with RLM1. Requires Mg(2+) as cofactor. Post-translationally, dually phosphorylated on Thr-190 and Tyr-192, which activates the enzyme.

It catalyses the reaction L-seryl-[protein] + ATP = O-phospho-L-seryl-[protein] + ADP + H(+). The enzyme catalyses L-threonyl-[protein] + ATP = O-phospho-L-threonyl-[protein] + ADP + H(+). Activated by tyrosine and threonine phosphorylation by MKK1 and MKK2. Functionally, serine/threonine protein kinase involved in a signal transduction pathway that plays a role in yeast cell morphogenesis and cell growth. This pathway seems to start by SMP3; then involve the kinase PKC1 that may act the BCK1 kinase that then phosphorylates MKK1 and MKK2 which themselves phosphorylate the SLT2/MPK1 kinase which itself then phosphorylates and activates the transcription factor RLM1. Directly phosphorylates BCY1 upon TOR complex 1 (TORC1) inhibition. The chain is Mitogen-activated protein kinase SLT2/MPK1 (SLT2) from Saccharomyces cerevisiae (strain ATCC 204508 / S288c) (Baker's yeast).